Consider the following 101-residue polypeptide: NAD(P)H-quinone oxidoreductase subunit 4L, chloroplastic (101 aa).

Transmembrane regions (helical) follow at residues Met2–Ile22, Met32–Phe52, and Ile61–Val81.

This sequence belongs to the complex I subunit 4L family. In terms of assembly, NDH is composed of at least 16 different subunits, 5 of which are encoded in the nucleus.

The protein localises to the plastid. The protein resides in the chloroplast thylakoid membrane. The catalysed reaction is a plastoquinone + NADH + (n+1) H(+)(in) = a plastoquinol + NAD(+) + n H(+)(out). It carries out the reaction a plastoquinone + NADPH + (n+1) H(+)(in) = a plastoquinol + NADP(+) + n H(+)(out). Functionally, NDH shuttles electrons from NAD(P)H:plastoquinone, via FMN and iron-sulfur (Fe-S) centers, to quinones in the photosynthetic chain and possibly in a chloroplast respiratory chain. The immediate electron acceptor for the enzyme in this species is believed to be plastoquinone. Couples the redox reaction to proton translocation, and thus conserves the redox energy in a proton gradient. This chain is NAD(P)H-quinone oxidoreductase subunit 4L, chloroplastic, found in Populus alba (White poplar).